The primary structure comprises 343 residues: Small ribosomal subunit biogenesis GTPase RsgA (343 aa).

In terms of domain architecture, CP-type G spans 116–275 (RGQLKPVAAN…LIDSPGIREF (160 aa)). Residues 163–166 (NKAD) and 217–225 (GQSGVGKSS) each bind GTP. Positions 299, 304, 306, and 312 each coordinate Zn(2+).

This sequence belongs to the TRAFAC class YlqF/YawG GTPase family. RsgA subfamily. In terms of assembly, monomer. Associates with 30S ribosomal subunit, binds 16S rRNA. Zn(2+) is required as a cofactor.

It localises to the cytoplasm. In terms of biological role, one of several proteins that assist in the late maturation steps of the functional core of the 30S ribosomal subunit. Helps release RbfA from mature subunits. May play a role in the assembly of ribosomal proteins into the subunit. Circularly permuted GTPase that catalyzes slow GTP hydrolysis, GTPase activity is stimulated by the 30S ribosomal subunit. This Pseudomonas savastanoi pv. phaseolicola (strain 1448A / Race 6) (Pseudomonas syringae pv. phaseolicola (strain 1448A / Race 6)) protein is Small ribosomal subunit biogenesis GTPase RsgA.